Here is a 296-residue protein sequence, read N- to C-terminus: Bifunctional protein FolD (296 aa).

NADP(+) contacts are provided by residues 166–168 (GRS), Ser-195, and Thr-236.

It belongs to the tetrahydrofolate dehydrogenase/cyclohydrolase family. Homodimer.

It carries out the reaction (6R)-5,10-methylene-5,6,7,8-tetrahydrofolate + NADP(+) = (6R)-5,10-methenyltetrahydrofolate + NADPH. The catalysed reaction is (6R)-5,10-methenyltetrahydrofolate + H2O = (6R)-10-formyltetrahydrofolate + H(+). The protein operates within one-carbon metabolism; tetrahydrofolate interconversion. Functionally, catalyzes the oxidation of 5,10-methylenetetrahydrofolate to 5,10-methenyltetrahydrofolate and then the hydrolysis of 5,10-methenyltetrahydrofolate to 10-formyltetrahydrofolate. This is Bifunctional protein FolD from Dehalococcoides mccartyi (strain CBDB1).